The primary structure comprises 140 residues: Large-conductance mechanosensitive channel (140 aa).

2 consecutive transmembrane segments (helical) span residues 14 to 34 (VMDLAVGVIIGGAFATITGSL) and 85 to 105 (GAFVTAVINFLILAFIIFLLV).

Belongs to the MscL family. Homopentamer.

Its subcellular location is the cell inner membrane. Channel that opens in response to stretch forces in the membrane lipid bilayer. May participate in the regulation of osmotic pressure changes within the cell. The protein is Large-conductance mechanosensitive channel of Sphingopyxis alaskensis (strain DSM 13593 / LMG 18877 / RB2256) (Sphingomonas alaskensis).